A 674-amino-acid polypeptide reads, in one-letter code: Electrogenic aspartate/glutamate antiporter SLC25A13, mitochondrial (674 aa).

Ala2 carries the post-translational modification N-acetylalanine. The interval 2-295 (AAAKVALTKR…TLADIERIAP (294 aa)) is regulatory N-terminal domain. Topologically, residues 2-331 (AAAKVALTKR…LLQVAESAYR (330 aa)) are mitochondrial intermembrane. EF-hand domains are found at residues 51-86 (SQPN…SVLC), 87-122 (APDA…TTIH), 123-157 (QHIP…FLLE), and 158-193 (IQLE…IRPH). Asp66, Thr68, Asp70, Leu72, and Glu77 together coordinate Ca(2+). The interval 296 to 311 (LEEGTLPFNLAEAQRQ) is linker loop domain. The tract at residues 321-611 (VLLQVAESAY…LQRWFYIDFG (291 aa)) is carrier domain. Solcar repeat units follow at residues 326–418 (AESA…VRDK), 426–510 (VPLA…ARAS), and 518–605 (VSPG…LQRW). Residues 332 to 349 (FGLGSVAGAVGATAVYPI) form a helical membrane-spanning segment. Residues 350–392 (DLVKTRMQNQRSTGSFVGELMYKNSFDCFKKVLRYEGFFGLYR) are Mitochondrial matrix-facing. An N6-acetyllysine mark is found at Lys353 and Lys372. A helical membrane pass occupies residues 393-412 (GLLPQLLGVAPEKAIKLTVN). Residues 413–435 (DFVRDKFMHKDGSVPLAAEILAG) are Mitochondrial intermembrane-facing. Residues 436–449 (GCAGGSQVIFTNPL) form a helical membrane-spanning segment. At 450 to 484 (EIVKIRLQVAGEITTGPRVSALSVVRDLGFFGIYK) the chain is on the mitochondrial matrix side. Lys453 bears the N6-methyllysine mark. At Lys484 the chain carries N6-acetyllysine; alternate. Lys484 carries the post-translational modification N6-succinyllysine; alternate. Residues 485 to 504 (GAKACFLRDIPFSAIYFPCY) form a helical membrane-spanning segment. Over 505–523 (AHARASFANEDGQVSPGSL) the chain is Mitochondrial intermembrane. Residues 524–541 (LLAGAIAGMPAASLVTPA) traverse the membrane as a helical segment. At 542–580 (DVIKTRLQVAARAGQTTYSGVIDCFKKILREEGPKALWK) the chain is on the mitochondrial matrix side. Lys580 carries the post-translational modification N6-succinyllysine. A helical membrane pass occupies residues 581 to 599 (GAARVFRSSPQFGVTLLTY). Residues 600–674 (ELLQRWFYID…PTSEAIGGGP (75 aa)) lie on the Mitochondrial intermembrane side of the membrane. Residues 612-674 (GVKPMGSEPV…PTSEAIGGGP (63 aa)) form a C-terminal domain region. The residue at position 661 (Lys661) is an N6-acetyllysine.

It belongs to the mitochondrial carrier (TC 2.A.29) family. In terms of assembly, homodimer (via N-terminus).

It localises to the mitochondrion inner membrane. The enzyme catalyses L-aspartate(in) + L-glutamate(out) + H(+)(out) = L-aspartate(out) + L-glutamate(in) + H(+)(in). The catalysed reaction is 3-sulfino-L-alanine(out) + L-glutamate(in) + H(+)(in) = 3-sulfino-L-alanine(in) + L-glutamate(out) + H(+)(out). It catalyses the reaction 3-sulfino-L-alanine(out) + L-aspartate(in) = 3-sulfino-L-alanine(in) + L-aspartate(out). Functionally, mitochondrial electrogenic aspartate/glutamate antiporter that favors efflux of aspartate and entry of glutamate and proton within the mitochondria as part of the malate-aspartate shuttle. Also mediates the uptake of L-cysteinesulfinate (3-sulfino-L-alanine) by mitochondria in exchange of L-glutamate and proton. Can also exchange L-cysteinesulfinate with aspartate in their anionic form without any proton translocation. Lacks transport activity towards gamma-aminobutyric acid (GABA). The polypeptide is Electrogenic aspartate/glutamate antiporter SLC25A13, mitochondrial (Macaca fascicularis (Crab-eating macaque)).